The primary structure comprises 604 residues: NADP-dependent malic enzyme, mitochondrial (604 aa).

The interval 29–50 (APAQGCHSKPGPARPVPLKKRG) is disordered. Tyr-137 (proton donor) is an active-site residue. Residue Arg-190 coordinates NAD(+). Lys-208 acts as the Proton acceptor in catalysis. A divalent metal cation-binding residues include Glu-280, Asp-281, and Asp-304. Asp-304 lines the NAD(+) pocket. Ser-371 carries the post-translational modification Phosphoserine. Asn-443 lines the NAD(+) pocket.

Belongs to the malic enzymes family. Mg(2+) serves as cofactor. Mn(2+) is required as a cofactor. In terms of tissue distribution, expressed predominantly in organs with a low-division rate.

The protein resides in the mitochondrion matrix. The catalysed reaction is (S)-malate + NADP(+) = pyruvate + CO2 + NADPH. The enzyme catalyses oxaloacetate + H(+) = pyruvate + CO2. Catalyzes the oxidative decarboxylation of (S)-malate to pyruvate using NADP(+) as a cofactor. Can also reverse the decarboxylation reaction, but only with significantly lower efficiency. The sequence is that of NADP-dependent malic enzyme, mitochondrial from Homo sapiens (Human).